Reading from the N-terminus, the 78-residue chain is Acyl carrier protein (78 aa).

The 76-residue stretch at 2-77 (SDIADRVKKI…DAIKFLEKNS (76 aa)) folds into the Carrier domain. Position 37 is an O-(pantetheine 4'-phosphoryl)serine (serine 37).

This sequence belongs to the acyl carrier protein (ACP) family. Post-translationally, 4'-phosphopantetheine is transferred from CoA to a specific serine of apo-ACP by AcpS. This modification is essential for activity because fatty acids are bound in thioester linkage to the sulfhydryl of the prosthetic group.

It is found in the cytoplasm. Its pathway is lipid metabolism; fatty acid biosynthesis. Its function is as follows. Carrier of the growing fatty acid chain in fatty acid biosynthesis. This is Acyl carrier protein from Methylobacterium sp. (strain 4-46).